We begin with the raw amino-acid sequence, 209 residues long: Kynurenine formamidase (209 aa).

Residue phenylalanine 19 participates in substrate binding. Zn(2+)-binding residues include histidine 49, histidine 53, and aspartate 55. Histidine 59 (proton donor/acceptor) is an active-site residue. Zn(2+) contacts are provided by histidine 160 and glutamate 172.

Belongs to the Cyclase 1 superfamily. KynB family. Homodimer. The cofactor is Zn(2+).

The enzyme catalyses N-formyl-L-kynurenine + H2O = L-kynurenine + formate + H(+). It participates in amino-acid degradation; L-tryptophan degradation via kynurenine pathway; L-kynurenine from L-tryptophan: step 2/2. Catalyzes the hydrolysis of N-formyl-L-kynurenine to L-kynurenine, the second step in the kynurenine pathway of tryptophan degradation. This chain is Kynurenine formamidase, found in Delftia acidovorans (strain DSM 14801 / SPH-1).